We begin with the raw amino-acid sequence, 183 residues long: Ribosome-recycling factor (183 aa).

The protein belongs to the RRF family.

The protein resides in the cytoplasm. Functionally, responsible for the release of ribosomes from messenger RNA at the termination of protein biosynthesis. May increase the efficiency of translation by recycling ribosomes from one round of translation to another. The polypeptide is Ribosome-recycling factor (Ureaplasma parvum serovar 3 (strain ATCC 27815 / 27 / NCTC 11736)).